We begin with the raw amino-acid sequence, 295 residues long: 4-hydroxy-tetrahydrodipicolinate synthase (295 aa).

Residue Thr48 coordinates pyruvate. Tyr136 acts as the Proton donor/acceptor in catalysis. Lys164 serves as the catalytic Schiff-base intermediate with substrate. A pyruvate-binding site is contributed by Ile206.

It belongs to the DapA family. In terms of assembly, homotetramer; dimer of dimers.

It localises to the cytoplasm. It carries out the reaction L-aspartate 4-semialdehyde + pyruvate = (2S,4S)-4-hydroxy-2,3,4,5-tetrahydrodipicolinate + H2O + H(+). The protein operates within amino-acid biosynthesis; L-lysine biosynthesis via DAP pathway; (S)-tetrahydrodipicolinate from L-aspartate: step 3/4. Its function is as follows. Catalyzes the condensation of (S)-aspartate-beta-semialdehyde [(S)-ASA] and pyruvate to 4-hydroxy-tetrahydrodipicolinate (HTPA). In Actinobacillus pleuropneumoniae serotype 5b (strain L20), this protein is 4-hydroxy-tetrahydrodipicolinate synthase.